The following is a 672-amino-acid chain: Putative sodium/calcium exchanger 7 (672 aa).

A signal peptide spans 1 to 23 (MAQPSILFSLTLIFLISIKSCDA). The next 12 helical transmembrane spans lie at 88-108 (VILI…VSSA), 130-150 (VAGV…GSIA), 164-184 (LGEL…TIIL), 196-216 (IRDL…FVFY), 221-241 (LWMP…VIGA), 451-471 (LTLL…QFFL), 479-499 (PGLW…IMVF), 522-542 (IAWI…LGVV), 551-571 (GLTI…VSVV), 581-601 (AAAI…PFTI), 620-640 (LILF…VQKF), and 649-669 (VLIS…TGVL).

The protein belongs to the Ca(2+):cation antiporter (CaCA) (TC 2.A.19) family.

The protein localises to the membrane. This Caenorhabditis elegans protein is Putative sodium/calcium exchanger 7 (ncx-7).